Consider the following 149-residue polypeptide: uncharacterized protein (149 aa).

Residues 1-103 (MFGLKVKNAE…SPTQGSRLRH (103 aa)) form a disordered region. Over residues 7 to 18 (KNAEADTAKSNE) the composition is skewed to basic and acidic residues. A compositionally biased stretch (low complexity) spans 26 to 41 (TGSSTTSGSGQSTQRG). A compositionally biased stretch (polar residues) spans 61–72 (GSQGNSGDQGTE).

Belongs to the adhesin P1 family.

This is an uncharacterized protein from Mycoplasma pneumoniae (strain ATCC 29342 / M129 / Subtype 1) (Mycoplasmoides pneumoniae).